The primary structure comprises 234 residues: 2-C-methyl-D-erythritol 4-phosphate cytidylyltransferase (234 aa).

Belongs to the IspD/TarI cytidylyltransferase family. IspD subfamily.

The enzyme catalyses 2-C-methyl-D-erythritol 4-phosphate + CTP + H(+) = 4-CDP-2-C-methyl-D-erythritol + diphosphate. The protein operates within isoprenoid biosynthesis; isopentenyl diphosphate biosynthesis via DXP pathway; isopentenyl diphosphate from 1-deoxy-D-xylulose 5-phosphate: step 2/6. In terms of biological role, catalyzes the formation of 4-diphosphocytidyl-2-C-methyl-D-erythritol from CTP and 2-C-methyl-D-erythritol 4-phosphate (MEP). This chain is 2-C-methyl-D-erythritol 4-phosphate cytidylyltransferase, found in Shewanella sediminis (strain HAW-EB3).